The chain runs to 87 residues: Large ribosomal subunit protein bL31B (87 aa).

Belongs to the bacterial ribosomal protein bL31 family. Type B subfamily. In terms of assembly, part of the 50S ribosomal subunit.

The sequence is that of Large ribosomal subunit protein bL31B from Pseudomonas paraeruginosa (strain DSM 24068 / PA7) (Pseudomonas aeruginosa (strain PA7)).